A 249-amino-acid chain; its full sequence is Ribosomal RNA small subunit methyltransferase J (249 aa).

Residues 97 to 98, 113 to 114, and Asp167 contribute to the S-adenosyl-L-methionine site; these read RD and ER.

The protein belongs to the methyltransferase superfamily. RsmJ family.

The protein localises to the cytoplasm. It catalyses the reaction guanosine(1516) in 16S rRNA + S-adenosyl-L-methionine = N(2)-methylguanosine(1516) in 16S rRNA + S-adenosyl-L-homocysteine + H(+). Functionally, specifically methylates the guanosine in position 1516 of 16S rRNA. This is Ribosomal RNA small subunit methyltransferase J from Aeromonas salmonicida (strain A449).